We begin with the raw amino-acid sequence, 1337 residues long: Multidrug resistance protein fer6 (1337 aa).

An N-terminal signal peptide occupies residues 1–23; sequence MTPEASANWFSLCWFAWIDPILT. N-linked (GlcNAc...) asparagine glycosylation occurs at asparagine 71. A run of 2 helical transmembrane segments spans residues 94-114 and 138-158; these read FWIG…SPLL and LGSG…CVFL. The region spanning 95–386 is the ABC transmembrane type-1 1 domain; that stretch reads WIGGLLKLLA…LPIAWNAIVD (292 aa). Asparagine 187 carries N-linked (GlcNAc...) asparagine glycosylation. Transmembrane regions (helical) follow at residues 220-242, 247-269, 331-351, and 359-379; these read FFHM…IWSL, LPGI…RLFA, ALAF…YALV, and ILFS…FLPI. One can recognise an ABC transporter 1 domain in the interval 417–667; sequence IQLEDASFTW…KGRVAELLLT (251 aa). Positions 432 to 460 are disordered; that stretch reads ADTAKPVNEKKGQDSPSNEKETPVDRAST. Basic and acidic residues predominate over residues 438–455; that stretch reads VNEKKGQDSPSNEKETPV. An N-linked (GlcNAc...) asparagine glycan is attached at asparagine 465. ATP is bound at residue 478-485; that stretch reads GGVGSGKS. The interval 699 to 751 is disordered; it reads GSASNRNSEASESTTTTVNAESKDTSNAEGVTNKTEKKDLVAPPAQAKSKALM. Positions 700–718 are enriched in low complexity; that stretch reads SASNRNSEASESTTTTVNA. N-linked (GlcNAc...) asparagine glycosylation is present at asparagine 731. 6 helical membrane-spanning segments follow: residues 769 to 789, 817 to 837, 890 to 909, 915 to 933, 999 to 1019, and 1028 to 1048; these read YLNA…VLVF, GIYA…GVIF, AMRT…VLIA, FLIP…AAYY, LSVR…ILVV, and GETG…GWMI. In terms of domain architecture, ABC transmembrane type-1 2 spans 781–1056; sequence LFLVAVLVFQ…MIRHAAELEN (276 aa). An N-linked (GlcNAc...) asparagine glycan is attached at asparagine 1057. The region spanning 1097–1325 is the ABC transporter 2 domain; it reads IRFEGVEAKY…EKGAFRALCD (229 aa). Residue 1131-1138 participates in ATP binding; the sequence is GRTGAGKS. An N-linked (GlcNAc...) asparagine glycan is attached at asparagine 1227.

This sequence belongs to the ABC transporter superfamily. ABCC family. Conjugate transporter (TC 3.A.1.208) subfamily.

Its subcellular location is the membrane. Functionally, multidrug resistance protein; part of the gene cluster that mediates the biosynthesis of siderophore ferrichrome A which is contributing to organismal virulence. The polypeptide is Multidrug resistance protein fer6 (Mycosarcoma maydis (Corn smut fungus)).